Reading from the N-terminus, the 190-residue chain is Imidazoleglycerol-phosphate dehydratase (190 aa).

It belongs to the imidazoleglycerol-phosphate dehydratase family.

It is found in the cytoplasm. The enzyme catalyses D-erythro-1-(imidazol-4-yl)glycerol 3-phosphate = 3-(imidazol-4-yl)-2-oxopropyl phosphate + H2O. The protein operates within amino-acid biosynthesis; L-histidine biosynthesis; L-histidine from 5-phospho-alpha-D-ribose 1-diphosphate: step 6/9. The protein is Imidazoleglycerol-phosphate dehydratase of Wolinella succinogenes (strain ATCC 29543 / DSM 1740 / CCUG 13145 / JCM 31913 / LMG 7466 / NCTC 11488 / FDC 602W) (Vibrio succinogenes).